Here is a 139-residue protein sequence, read N- to C-terminus: 6,7-dimethyl-8-ribityllumazine synthase (139 aa).

Residues F11, 42–44 (ALE), and 66–68 (VVI) contribute to the 5-amino-6-(D-ribitylamino)uracil site. Position 71 to 72 (71 to 72 (ET)) interacts with (2S)-2-hydroxy-3-oxobutyl phosphate. H74 (proton donor) is an active-site residue. N98 is a 5-amino-6-(D-ribitylamino)uracil binding site. R112 is a binding site for (2S)-2-hydroxy-3-oxobutyl phosphate.

This sequence belongs to the DMRL synthase family.

It carries out the reaction (2S)-2-hydroxy-3-oxobutyl phosphate + 5-amino-6-(D-ribitylamino)uracil = 6,7-dimethyl-8-(1-D-ribityl)lumazine + phosphate + 2 H2O + H(+). It functions in the pathway cofactor biosynthesis; riboflavin biosynthesis; riboflavin from 2-hydroxy-3-oxobutyl phosphate and 5-amino-6-(D-ribitylamino)uracil: step 1/2. Its function is as follows. Catalyzes the formation of 6,7-dimethyl-8-ribityllumazine by condensation of 5-amino-6-(D-ribitylamino)uracil with 3,4-dihydroxy-2-butanone 4-phosphate. This is the penultimate step in the biosynthesis of riboflavin. This Zymomonas mobilis subsp. mobilis (strain ATCC 31821 / ZM4 / CP4) protein is 6,7-dimethyl-8-ribityllumazine synthase.